We begin with the raw amino-acid sequence, 483 residues long: Regulatory protein ViaA (483 aa).

The protein belongs to the ViaA family. In terms of assembly, homodimer. Interacts with RavA.

Its subcellular location is the cytoplasm. Component of the RavA-ViaA chaperone complex, which may act on the membrane to optimize the function of some of the respiratory chains. ViaA stimulates the ATPase activity of RavA. The polypeptide is Regulatory protein ViaA (Salmonella choleraesuis (strain SC-B67)).